The following is a 453-amino-acid chain: UDP-glycosyltransferase 79B6 (453 aa).

UDP-alpha-D-glucose contacts are provided by residues Ser266, 325–327, 342–350, and 364–367; these read VQQ, HCGFGSMWE, and LGEQ.

It belongs to the UDP-glycosyltransferase family.

The polypeptide is UDP-glycosyltransferase 79B6 (UGT79B6) (Arabidopsis thaliana (Mouse-ear cress)).